The sequence spans 96 residues: Co-chaperonin GroES (96 aa).

It belongs to the GroES chaperonin family. In terms of assembly, heptamer of 7 subunits arranged in a ring. Interacts with the chaperonin GroEL.

It is found in the cytoplasm. Its function is as follows. Together with the chaperonin GroEL, plays an essential role in assisting protein folding. The GroEL-GroES system forms a nano-cage that allows encapsulation of the non-native substrate proteins and provides a physical environment optimized to promote and accelerate protein folding. GroES binds to the apical surface of the GroEL ring, thereby capping the opening of the GroEL channel. The protein is Co-chaperonin GroES of Photobacterium profundum (strain SS9).